Reading from the N-terminus, the 916-residue chain is DNA mismatch repair protein MutS (916 aa).

The segment at 1–47 (MSEALSVPAAEGENTVTASESPDLAATSARAEKVGKQEKPEKAEKQS) is disordered. Positions 30-45 (RAEKVGKQEKPEKAEK) are enriched in basic and acidic residues. 656–663 (GPNMGGKS) is an ATP binding site. The span at 843–861 (ADATPTPQMDLFSAQSSPS) shows a compositional bias: polar residues. The segment at 843–880 (ADATPTPQMDLFSAQSSPSADDEDDKSAGQSAVPPAQA) is disordered.

Belongs to the DNA mismatch repair MutS family.

In terms of biological role, this protein is involved in the repair of mismatches in DNA. It is possible that it carries out the mismatch recognition step. This protein has a weak ATPase activity. This chain is DNA mismatch repair protein MutS, found in Cupriavidus metallidurans (strain ATCC 43123 / DSM 2839 / NBRC 102507 / CH34) (Ralstonia metallidurans).